Reading from the N-terminus, the 344-residue chain is Flavonoid 7-O-methyltransferase 1A (344 aa).

Asp211 lines the S-adenosyl-L-methionine pocket. His249 serves as the catalytic Proton acceptor.

It belongs to the class I-like SAM-binding methyltransferase superfamily. Cation-independent O-methyltransferase family. In terms of assembly, homodimer.

The enzyme catalyses apigenin + S-adenosyl-L-methionine = genkwanin + S-adenosyl-L-homocysteine + H(+). The catalysed reaction is luteolin + S-adenosyl-L-methionine = luteolin 7-methyl ether + S-adenosyl-L-homocysteine + H(+). It catalyses the reaction quercetin + S-adenosyl-L-methionine = rhamnetin + S-adenosyl-L-homocysteine + H(+). It carries out the reaction (2S)-naringenin + S-adenosyl-L-methionine = (2S)-sakuranetin + S-adenosyl-L-homocysteine + H(+). The enzyme catalyses kaempferol + S-adenosyl-L-methionine = kaempferol 7-methyl ether + S-adenosyl-L-homocysteine + H(+). The catalysed reaction is isorhamnetin + S-adenosyl-L-methionine = rhamnacene + S-adenosyl-L-homocysteine + H(+). It catalyses the reaction 4',7,8-trihydroxyflavone + S-adenosyl-L-methionine = 4',8-dihydroxy-7-methoxyflavone + S-adenosyl-L-homocysteine. It carries out the reaction scutellarein + S-adenosyl-L-methionine = scutellarein 7-methyl ether + S-adenosyl-L-homocysteine. It participates in flavonoid metabolism. Functionally, flavonoid 7-O-methyltransferase involved in the biosynthesis of polymethoxylated flavonoids natural products such as pebrellin, aroma compounds which contribute to the flavor of peppermint, and exhibit pharmacological activities such as anti-allergic, anti-oxidant, antibacterial, anti-proliferative, and anti-inflammatory effects. Catalyzes S-adenosylmethionine-dependent regioselective 7-O-methylation of flavonoids; active on various hydroxylated flavonoid substrates, including luteolin (LUT), quercetin, kaempferol, isorhamnetin, apigenin (API), scutellarein (6-hydroxy-apigenin, 6-OH-API, SCU), 7,8,4'-trihydroxy-flavone and naringenin (NAR), and, with a lower efficiency, 7,8,3',4'-tetrahydroxy-flavone, taxifolin, hesperetin and genistein. The sequence is that of Flavonoid 7-O-methyltransferase 1A from Mentha piperita (Peppermint).